The primary structure comprises 586 residues: CTP synthase 2 (586 aa).

Residues 300 to 554 (SIALVGKYTK…LAATGNLNAY (255 aa)) enclose the Glutamine amidotransferase type-1 domain. Catalysis depends on for GATase activity residues C399, H526, and E528. Residues 564–586 (SDRYSDASDDSFSEPRLAELEIS) form a disordered region. 3 positions are modified to phosphoserine: S568, S571, and S574.

It belongs to the CTP synthase family.

The catalysed reaction is UTP + L-glutamine + ATP + H2O = CTP + L-glutamate + ADP + phosphate + 2 H(+). The protein operates within pyrimidine metabolism; CTP biosynthesis via de novo pathway; CTP from UDP: step 2/2. Catalyzes the ATP-dependent amination of UTP to CTP with either L-glutamine or ammonia as the source of nitrogen. Constitutes the rate-limiting enzyme in the synthesis of cytosine nucleotides. In Bos taurus (Bovine), this protein is CTP synthase 2 (CTPS2).